The following is a 458-amino-acid chain: tRNA modification GTPase MnmE (458 aa).

3 residues coordinate (6S)-5-formyl-5,6,7,8-tetrahydrofolate: arginine 22, glutamate 85, and arginine 124. Residues 220–379 (GLATAIIGRP…LEEAISRLFF (160 aa)) form the TrmE-type G domain. Asparagine 230 serves as a coordination point for K(+). GTP is bound by residues 230 to 235 (NVGKSS), 249 to 255 (TDIPGTT), and 274 to 277 (DTAG). Serine 234 lines the Mg(2+) pocket. K(+)-binding residues include threonine 249, isoleucine 251, and threonine 254. Threonine 255 is a binding site for Mg(2+). Lysine 458 contributes to the (6S)-5-formyl-5,6,7,8-tetrahydrofolate binding site.

This sequence belongs to the TRAFAC class TrmE-Era-EngA-EngB-Septin-like GTPase superfamily. TrmE GTPase family. In terms of assembly, homodimer. Heterotetramer of two MnmE and two MnmG subunits. K(+) is required as a cofactor.

The protein resides in the cytoplasm. Functionally, exhibits a very high intrinsic GTPase hydrolysis rate. Involved in the addition of a carboxymethylaminomethyl (cmnm) group at the wobble position (U34) of certain tRNAs, forming tRNA-cmnm(5)s(2)U34. This is tRNA modification GTPase MnmE from Shouchella clausii (strain KSM-K16) (Alkalihalobacillus clausii).